Here is a 504-residue protein sequence, read N- to C-terminus: ATP synthase subunit alpha 1 (504 aa).

Gly172–Thr179 contacts ATP.

The protein belongs to the ATPase alpha/beta chains family. As to quaternary structure, F-type ATPases have 2 components, CF(1) - the catalytic core - and CF(0) - the membrane proton channel. CF(1) has five subunits: alpha(3), beta(3), gamma(1), delta(1), epsilon(1). CF(0) has three main subunits: a(1), b(2) and c(9-12). The alpha and beta chains form an alternating ring which encloses part of the gamma chain. CF(1) is attached to CF(0) by a central stalk formed by the gamma and epsilon chains, while a peripheral stalk is formed by the delta and b chains.

It localises to the cell inner membrane. It catalyses the reaction ATP + H2O + 4 H(+)(in) = ADP + phosphate + 5 H(+)(out). In terms of biological role, produces ATP from ADP in the presence of a proton gradient across the membrane. The alpha chain is a regulatory subunit. In Rhodopirellula baltica (strain DSM 10527 / NCIMB 13988 / SH1), this protein is ATP synthase subunit alpha 1.